Here is a 196-residue protein sequence, read N- to C-terminus: Large ribosomal subunit protein bL9 (196 aa).

Belongs to the bacterial ribosomal protein bL9 family.

In terms of biological role, binds to the 23S rRNA. This is Large ribosomal subunit protein bL9 from Rhodopseudomonas palustris (strain HaA2).